The following is a 714-amino-acid chain: Fatty acid oxidation complex subunit alpha (714 aa).

The segment at 1–190 is enoyl-CoA hydratase; that stretch reads MEMASVFTLN…KLGLVDDVVP (190 aa). Residues 306–714 are 3-hydroxyacyl-CoA dehydrogenase; it reads APLNSVGILG…FWKTTATDLQ (409 aa).

The protein in the N-terminal section; belongs to the enoyl-CoA hydratase/isomerase family. In the central section; belongs to the 3-hydroxyacyl-CoA dehydrogenase family. Heterotetramer of two alpha chains (FadJ) and two beta chains (FadI).

Its subcellular location is the cytoplasm. The enzyme catalyses a (3S)-3-hydroxyacyl-CoA = a (2E)-enoyl-CoA + H2O. It carries out the reaction a 4-saturated-(3S)-3-hydroxyacyl-CoA = a (3E)-enoyl-CoA + H2O. It catalyses the reaction a (3S)-3-hydroxyacyl-CoA + NAD(+) = a 3-oxoacyl-CoA + NADH + H(+). The catalysed reaction is (3S)-3-hydroxybutanoyl-CoA = (3R)-3-hydroxybutanoyl-CoA. The protein operates within lipid metabolism; fatty acid beta-oxidation. In terms of biological role, catalyzes the formation of a hydroxyacyl-CoA by addition of water on enoyl-CoA. Also exhibits 3-hydroxyacyl-CoA epimerase and 3-hydroxyacyl-CoA dehydrogenase activities. In Escherichia coli (strain SE11), this protein is Fatty acid oxidation complex subunit alpha.